A 153-amino-acid polypeptide reads, in one-letter code: Ribosomal RNA large subunit methyltransferase H (153 aa).

S-adenosyl-L-methionine-binding residues include Leu-71 and Gly-102.

Belongs to the RNA methyltransferase RlmH family. Homodimer.

It is found in the cytoplasm. It catalyses the reaction pseudouridine(1915) in 23S rRNA + S-adenosyl-L-methionine = N(3)-methylpseudouridine(1915) in 23S rRNA + S-adenosyl-L-homocysteine + H(+). Its function is as follows. Specifically methylates the pseudouridine at position 1915 (m3Psi1915) in 23S rRNA. The polypeptide is Ribosomal RNA large subunit methyltransferase H (Anaeromyxobacter sp. (strain K)).